Reading from the N-terminus, the 160-residue chain is 6-hydroxypseudooxynicotine dehydrogenase complex subunit beta (160 aa).

Positions 4–80 (FRLTVEVNGV…NSRIETVESL (77 aa)) constitute a 2Fe-2S ferredoxin-type domain. C42, C47, C50, C62, C101, C104, C137, and C139 together coordinate [2Fe-2S] cluster.

In terms of assembly, heterohexamer of 2 alpha (kdhA), 2 beta (kdhB) and 2 gamma (kdhC) subunit. Dimer of heterotrimers. The cofactor is [2Fe-2S] cluster.

The catalysed reaction is 6-hydroxypseudooxynicotine + A + H2O = 2,6-dihydroxypseudooxynicotine + AH2. It functions in the pathway alkaloid degradation; nicotine degradation. In terms of biological role, molybdo-flavoprotein enzyme complex involved in nicotine degradation. The subunit gamma (large subunit) contains the substrate-binding sites, the subunit alpha (medium subunit) binds FAD and the subunit beta (small subunit) has a 2Fe-2S ferredoxin-type domain which binds 2 2Fe-2S clusters. In Paenarthrobacter nicotinovorans (Arthrobacter nicotinovorans), this protein is 6-hydroxypseudooxynicotine dehydrogenase complex subunit beta (kdhB).